Reading from the N-terminus, the 127-residue chain is Protein ApaG (127 aa).

The region spanning 3–127 is the ApaG domain; sequence EGKKYEIAVK…FILSVPRILH (125 aa).

This chain is Protein ApaG, found in Nitrosospira multiformis (strain ATCC 25196 / NCIMB 11849 / C 71).